We begin with the raw amino-acid sequence, 1349 residues long: Membrane-associated phosphatidylinositol transfer protein 2 (1349 aa).

Positions 262 to 344 are disordered; that stretch reads EDGEEATELV…RDSDESSDDE (83 aa). Residues 302–322 are compositionally biased toward low complexity; it reads KQWSTSSKSSRSSKRGASPSR. Serine 337, serine 341, serine 368, and serine 589 each carry phosphoserine. Over residues 618-631 the composition is skewed to gly residues; the sequence is GGGGGSSGGGGSSG. Positions 618–671 are disordered; sequence GGGGGSSGGGGSSGGSSLESSRHLSRSNVDIPRSNGTEDPKRQLPRKRSDSSTY. The residue at position 644 (serine 644) is a Phosphoserine. The segment covering 653–667 has biased composition (basic and acidic residues); sequence GTEDPKRQLPRKRSD. Phosphoserine occurs at positions 700, 701, and 702. In terms of domain architecture, DDHD spans 715 to 963; it reads FDFEITDLFL…VSFLLRQVMR (249 aa). Position 828 is an omega-N-methylarginine (arginine 828). The segment at 876–900 is disordered; that stretch reads LPAPSPTTPGPHPPARKASPGLERA. The segment covering 878–888 has biased composition (pro residues); that stretch reads APSPTTPGPHP. At serine 1277 the chain carries Phosphoserine. The segment at 1296–1326 is disordered; the sequence is TISAQPSGPSHRHERTQSQADGEQRGQRSMS.

This sequence belongs to the PtdIns transfer protein family. PI transfer class IIA subfamily. As to quaternary structure, interacts with PTK2B via its C-terminus. Interacts with CPNE4 (via VWFA domain). In terms of tissue distribution, highly expressed in brain, heart, ovary, testis and thymus. Detected in small intestine, prostate, pancreas, skeletal muscle, liver, colon and placenta.

Its subcellular location is the endomembrane system. In terms of biological role, catalyzes the transfer of phosphatidylinositol and phosphatidylcholine between membranes (in vitro). Binds calcium ions. The polypeptide is Membrane-associated phosphatidylinositol transfer protein 2 (PITPNM2) (Homo sapiens (Human)).